A 72-amino-acid chain; its full sequence is NAD(P)H-quinone oxidoreductase subunit O (72 aa).

It belongs to the complex I NdhO subunit family. NDH-1 can be composed of about 15 different subunits; different subcomplexes with different compositions have been identified which probably have different functions.

It is found in the cellular thylakoid membrane. The enzyme catalyses a plastoquinone + NADH + (n+1) H(+)(in) = a plastoquinol + NAD(+) + n H(+)(out). It carries out the reaction a plastoquinone + NADPH + (n+1) H(+)(in) = a plastoquinol + NADP(+) + n H(+)(out). Functionally, NDH-1 shuttles electrons from an unknown electron donor, via FMN and iron-sulfur (Fe-S) centers, to quinones in the respiratory and/or the photosynthetic chain. The immediate electron acceptor for the enzyme in this species is believed to be plastoquinone. Couples the redox reaction to proton translocation, and thus conserves the redox energy in a proton gradient. Cyanobacterial NDH-1 also plays a role in inorganic carbon-concentration. This chain is NAD(P)H-quinone oxidoreductase subunit O, found in Rippkaea orientalis (strain PCC 8801 / RF-1) (Cyanothece sp. (strain PCC 8801)).